A 397-amino-acid chain; its full sequence is Flavohemoprotein A (397 aa).

In terms of domain architecture, Globin spans 2 to 137 (SLSQQSISII…IAQAFIDAEA (136 aa)). His84 is a heme b binding site. Residues Tyr94 and Glu136 each act as charge relay system in the active site. The segment at 150-397 (WRDTREFIVD…YEIFGPLTNV (248 aa)) is reductase. One can recognise an FAD-binding FR-type domain in the interval 151–266 (RDTREFIVDR…SPPAGDYVVD (116 aa)). Residues Tyr189 and 208–211 (RHYS) contribute to the FAD site. 279-284 (GVGITP) lines the NADP(+) pocket. 390-393 (IFGP) is a binding site for FAD.

The protein belongs to the globin family. Two-domain flavohemoproteins subfamily. It in the C-terminal section; belongs to the flavoprotein pyridine nucleotide cytochrome reductase family. FAD serves as cofactor. Heme b is required as a cofactor.

The protein localises to the cytoplasm. The enzyme catalyses 2 nitric oxide + NADPH + 2 O2 = 2 nitrate + NADP(+) + H(+). The catalysed reaction is 2 nitric oxide + NADH + 2 O2 = 2 nitrate + NAD(+) + H(+). In terms of biological role, is involved in NO detoxification in an aerobic process, termed nitric oxide dioxygenase (NOD) reaction that utilizes O(2) and NAD(P)H to convert NO to nitrate, which protects the cell from various noxious nitrogen compounds. Therefore, plays a central role in the inducible response to nitrosative stress. In the presence of oxygen and NADH, it has NADH oxidase activity, which leads to the generation of superoxide and H(2)O(2). Under anaerobic conditions, it also exhibits nitric oxide reductase and FAD reductase activities. However, all these reactions are much lower than NOD activity. In Dictyostelium discoideum (Social amoeba), this protein is Flavohemoprotein A (fhbA).